A 382-amino-acid chain; its full sequence is Glycerate dehydrogenase (382 aa).

NAD(+) contacts are provided by residues 175 to 176 (RI), 271 to 273 (CSR), and Asp297. The active site involves Arg273. Glu302 is an active-site residue. Catalysis depends on His320, which acts as the Proton donor. 320-323 (HIAS) is an NAD(+) binding site.

It belongs to the D-isomer specific 2-hydroxyacid dehydrogenase family.

Its subcellular location is the peroxisome. The enzyme catalyses (R)-glycerate + NAD(+) = 3-hydroxypyruvate + NADH + H(+). The protein operates within photosynthesis; photorespiration; 3-phospho-D-glycerate from glycine: step 3/4. This Cucumis sativus (Cucumber) protein is Glycerate dehydrogenase (HPR-A).